Here is a 147-residue protein sequence, read N- to C-terminus: uncharacterized protein (147 aa).

It belongs to the RTX toxin acyltransferase family.

This is an uncharacterized protein from Synechocystis sp. (strain ATCC 27184 / PCC 6803 / Kazusa).